The sequence spans 870 residues: Protein RRP6-like 2 (870 aa).

The 3'-5' exonuclease domain occupies 263–428 (VQEVKDLKEL…YIYDLIKLEL (166 aa)). The HRDC domain maps to 479–559 (NAAQLAIVAG…RQSMQHYAAF (81 aa)). Disordered stretches follow at residues 583 to 605 (SEKK…SSQL), 649 to 668 (GALL…EKVK), 688 to 775 (TEKV…EDEP), and 821 to 870 (FGEG…SFKN). Basic and acidic residues-rich tracts occupy residues 720 to 729 (SKEDGVKELK) and 821 to 834 (FGEG…KREA). Over residues 840 to 849 (KGSTQEQSEF) the composition is skewed to polar residues.

The protein localises to the nucleus. The protein resides in the nucleolus. It localises to the cytoplasm. Functionally, acts as an important epigenetic regulator through multiple silencing mechanisms. Involved in association with RRP6L1 in the silencing of the solo LTR locus. Controls levels of non-coding RNAs (ncRNAs) from the solo LTR locus. Seems to function independently of the RNA-mediated gene silencing (RdDM) pathway. Functions redundantly with RRP6L1 in the regulation of FLC locus. Participates in the maintenance of trimethylated 'Lys-27' (H3K27me3) at FLC locus via the regulation of antisense long non-coding RNAs (lncRNAs) and the regulation of diverse antisense RNAs derived from the FLC locus. Seems not involved in the exosomal RNA degradation. May be involved in poly(A)-mediated RNA degradation. In Arabidopsis thaliana (Mouse-ear cress), this protein is Protein RRP6-like 2.